The following is a 103-amino-acid chain: MAGIQQKRKTIKSFKTRRKVVPVLIPKKGQAVISNTGEPASRYIIDYKNTQLLVKFISPQGKILSRRATGLTAKQQRIMANAIKRARMGGLVPFVNYELGSKK.

It belongs to the bacterial ribosomal protein bS18 family. As to quaternary structure, part of the 30S ribosomal subunit.

The protein localises to the plastid. It localises to the chloroplast. In Chlorella vulgaris (Green alga), this protein is Small ribosomal subunit protein bS18c (rps18).